Reading from the N-terminus, the 185-residue chain is Ribosome-recycling factor (185 aa).

Belongs to the RRF family.

It is found in the cytoplasm. Responsible for the release of ribosomes from messenger RNA at the termination of protein biosynthesis. May increase the efficiency of translation by recycling ribosomes from one round of translation to another. The sequence is that of Ribosome-recycling factor from Nocardioides sp. (strain ATCC BAA-499 / JS614).